Here is a 166-residue protein sequence, read N- to C-terminus: Peptidyl-prolyl cis-trans isomerase-like 1 (166 aa).

In terms of domain architecture, PPIase cyclophilin-type spans glutamine 10–proline 164. Residues histidine 54 to glycine 65, threonine 70 to glycine 71, alanine 99 to glycine 104, glycine 109 to phenylalanine 113, threonine 119, and lysine 125 contribute to the cyclosporin A site. Serine 149 is modified (phosphoserine).

Belongs to the cyclophilin-type PPIase family. PPIL1 subfamily. As to quaternary structure, identified in the spliceosome C complex. Interacts with SNW1/SKIP. Interacts with CDC40/PRP17; this interaction leads to CDC40 isomerization. Interacts with RBM22.

Its subcellular location is the nucleus. It catalyses the reaction [protein]-peptidylproline (omega=180) = [protein]-peptidylproline (omega=0). Inhibited by Cyclosporin A. Involved in pre-mRNA splicing as component of the spliceosome. PPIases accelerate the folding of proteins. It catalyzes the cis-trans isomerization of proline imidic peptide bonds in oligopeptides. Catalyzes prolyl peptide bond isomerization in CDC40/PRP17. Plays an important role in embryonic brain development; this function is independent of its isomerase activity. The sequence is that of Peptidyl-prolyl cis-trans isomerase-like 1 (Ppil1) from Mus musculus (Mouse).